We begin with the raw amino-acid sequence, 518 residues long: Glucose-1-phosphate adenylyltransferase large subunit 2, cytosolic (518 aa).

It belongs to the bacterial/plant glucose-1-phosphate adenylyltransferase family. As to quaternary structure, heterotetramer composed of two small and two large subunits.

The protein localises to the cytoplasm. Its subcellular location is the cytosol. The catalysed reaction is alpha-D-glucose 1-phosphate + ATP + H(+) = ADP-alpha-D-glucose + diphosphate. It participates in glycan biosynthesis; starch biosynthesis. Its activity is regulated as follows. Activated by 3'phosphoglycerate, inhibited by orthophosphate. Allosteric regulation. Inhibited by inorganic phosphate (Pi). In terms of biological role, involved in synthesis of starch. Catalyzes the synthesis of ADP-glucose, a molecule that serves as an activated glycosyl donor for alpha-1,4-glucan synthesis. Essential for starch synthesis in seed endosperm. Is essential for both catalytic and allosteric regulatory properties of the cytosolic heterotetramer enzyme. In Oryza sativa subsp. japonica (Rice), this protein is Glucose-1-phosphate adenylyltransferase large subunit 2, cytosolic.